Here is a 120-residue protein sequence, read N- to C-terminus: Large ribosomal subunit protein uL22 (120 aa).

Belongs to the universal ribosomal protein uL22 family. In terms of assembly, part of the 50S ribosomal subunit.

Functionally, this protein binds specifically to 23S rRNA; its binding is stimulated by other ribosomal proteins, e.g. L4, L17, and L20. It is important during the early stages of 50S assembly. It makes multiple contacts with different domains of the 23S rRNA in the assembled 50S subunit and ribosome. The globular domain of the protein is located near the polypeptide exit tunnel on the outside of the subunit, while an extended beta-hairpin is found that lines the wall of the exit tunnel in the center of the 70S ribosome. This chain is Large ribosomal subunit protein uL22, found in Corynebacterium diphtheriae (strain ATCC 700971 / NCTC 13129 / Biotype gravis).